The sequence spans 191 residues: MAKKYGMIHDENLCIGCQACNIACRSENKIPDSVYRLQVWVQGPKKLPDGTLSFNYHRQSCVQCENTPCVSVCPTKASYVNEDGIVSVNVDLCVGCLYCIAACPYQARYVDPVTKAPDKCNFCKDTRLARGEEPACVTVCPTDALTFGDMSDPKSKINKVLASKPTLRPKESLGTKPKLFIVPNKRGGIES.

3 consecutive 4Fe-4S ferredoxin-type domains span residues 5–34 (YGMI…PDSV), 50–83 (GTLS…VNED), and 84–113 (GIVS…VDPV). Cys14, Cys17, Cys20, Cys24, Cys61, Cys64, Cys69, Cys73, Cys93, Cys96, Cys99, Cys103, Cys120, Cys123, Cys136, and Cys140 together coordinate [4Fe-4S] cluster.

Functional polysulfide reductase is made up of three different (A, B, and C) subunits.

Its function is as follows. Component of the phosphorylative electron transport system with polysulfide as the terminal acceptor. The sequence is that of Polysulfide reductase chain B (psrB) from Wolinella succinogenes (strain ATCC 29543 / DSM 1740 / CCUG 13145 / JCM 31913 / LMG 7466 / NCTC 11488 / FDC 602W) (Vibrio succinogenes).